Consider the following 849-residue polypeptide: MTRETRFGALAADARWQKAWEAANSFATTDSGQKPKAYILEMFPYPSGRIHMGHVRNYAMGDVLARFKRMTGHDVLHPMGWDAFGMPAENAAMEKGVHPGGWTRANIDAMRAQLKRLGLAIDWSRELATCEPDYYGQEQALFLDLHAAGLVYRKESYVNWDPVDMTVLANEQVIDGRGWRSGALVEKKKLSQWFLKITDFADELLEGLGSLDKWPDKVRLMQENWIGKSQGLEFSFKFAGGAPAFAVFTTRPDTLYGASFAAISPDHPLAEKLAKDSPELAAFIAECRRQGTSAEQLETAEKLGFDTGLAVEHPLDPDWHLPVWVVNYVLMDYGTGAIFGCPAHDQRDLDFAHKYELPVHRVIADGDETAQHFTGSEAYTGPGKLVNSHFLDGMSIDEAKAAVITRAEHEGWGKGTTVWRLRDWGVSRQRYWGTPIPFIHCAACGTVPVPKSQLPVTLPDDVDFSVPGNPLDRHPTWKHVACPICEGAALRETDTLDTFVDSSWYFLRFASAPTDKPFDPEVIRRWLPVDQYIGGIEHAILHLLYARFWTRALNKLGMIDIEEPFASLFTQGMVTHETYSRPQGEGLPPLYFTPDEVERGADGATLIADGAPVEVGRVIKMSKSKKNVVDPDAILDQYGADAVRWFMLSDSPPERDLPWSEAGIEGAWRFVQRLWRLFGETENVGDGGEDKGLARKLHQTIAGVAADIEALGFNKAVAKIHALANEIEKAKPSATRAEACAKLILLVAPMMPHLAEEAWTALPASQRTTPMVADAAWPAADPALLIDDEVTIAIQMAGKLRDTMTVAKGADKAALEAAALARPRIVELLGGAAPKKVIVVPDRLVNILP.

A 'HIGH' region motif is present at residues 44–54 (PYPSGRIHMGH). Positions 620–624 (KMSKS) match the 'KMSKS' region motif. Position 623 (Lys-623) interacts with ATP.

Belongs to the class-I aminoacyl-tRNA synthetase family.

It is found in the cytoplasm. It carries out the reaction tRNA(Leu) + L-leucine + ATP = L-leucyl-tRNA(Leu) + AMP + diphosphate. This chain is Leucine--tRNA ligase, found in Sphingopyxis alaskensis (strain DSM 13593 / LMG 18877 / RB2256) (Sphingomonas alaskensis).